The following is a 612-amino-acid chain: Peroxisomal targeting signal receptor (612 aa).

An N-acetylmethionine modification is found at methionine 1. Positions 1–24 (MDVGSCSVGNNPLAQLHKHTQQNK) are disordered. Residue cysteine 6 forms a Glycyl cysteine thioester (Cys-Gly) (interchain with G-Cter in ubiquitin) linkage. An amphipathic helix 1 (AH1) region spans residues 7 to 29 (SVGNNPLAQLHKHTQQNKSLQFN). Glycyl lysine isopeptide (Lys-Gly) (interchain with G-Cter in ubiquitin) cross-links involve residues lysine 18 and lysine 24. Serine 61 is subject to Phosphoserine. The TPR 1 repeat unit spans residues 64-97 (NMANMQRFINGEPLIDDKRRMEIGPSSGRLPPFS). The interval 70-104 (RFINGEPLIDDKRRMEIGPSSGRLPPFSNVHSLQT) is amphipathic helix 2 (AH2). The WxxxF/Y motif 1 motif lies at 120–124 (WSQEF). The disordered stretch occupies residues 129 to 151 (SIQNRNADTGNSEKAWQRGSTTA). The interval 158–174 (PNTMMNNYAYASMNSLS) is amphipathic helix 3 (AH3). The interval 182–202 (AFMNQQQSGRSKEGVNEQEQQ) is disordered. A WxxxF/Y motif 2 motif is present at residues 204-208 (WTDQF). The segment at 257-273 (FQEVWDSIHKDAEEVLP) is amphipathic helix 4 (AH4). TPR repeat units follow at residues 313–346 (PNAY…KPDH), 347–380 (VDAW…DPKN), 381–418 (LEAM…IWSR), 419–456 (IKQQ…STID), 457–490 (PEIQ…NPND), 491–524 (ELMW…KPSF), and 525–558 (VRAR…HEVN).

This sequence belongs to the peroxisomal targeting signal receptor family. As to quaternary structure, interacts (via WxxxF/Y and LVxEF motifs) with PEX14; promoting translocation through the PEX13-PEX14 docking complex. Monoubiquitinated at Cys-6 by PEX2 during PEX5 passage through the retrotranslocation channel: monoubiquitination acts as a signal for PEX5 extraction and is required for proper export from peroxisomes and recycling. Ubiquitination at Cys-6 is UBC4-independent but requires the presence of PEX4. When PEX5 recycling is compromised, polyubiquitinated at Lys-18 and Lys-24 by PEX10 during its passage through the retrotranslocation channel, leading to its degradation. Ubiquitination at Lys-18 and Lys-24 are UBC4-dependent. Monoubiquitination at Cys-6 and polyubiquitination at Lys-18 and Lys-24 are removed by UBP15 in the cytosol, resetting PEX5 for a subsequent import cycle.

Its subcellular location is the cytoplasm. It is found in the cytosol. The protein localises to the peroxisome matrix. Functionally, receptor that mediates peroxisomal import of proteins containing a C-terminal PTS1-type tripeptide peroxisomal targeting signal (SKL-type). Binds to cargo proteins containing a PTS1 peroxisomal targeting signal in the cytosol, and translocates them into the peroxisome matrix by passing through the PEX13-PEX14 docking complex along with cargo proteins. PEX5 receptor is then retrotranslocated into the cytosol, leading to release of bound cargo in the peroxisome matrix, and reset for a subsequent peroxisome import cycle. The polypeptide is Peroxisomal targeting signal receptor (Saccharomyces cerevisiae (strain ATCC 204508 / S288c) (Baker's yeast)).